A 129-amino-acid chain; its full sequence is Glycine cleavage system H protein (129 aa).

The Lipoyl-binding domain maps to 24-106 (IATIGISAFA…YGEGWLVKVR (83 aa)). Position 65 is an N6-lipoyllysine (Lys65).

It belongs to the GcvH family. The glycine cleavage system is composed of four proteins: P, T, L and H. Requires (R)-lipoate as cofactor.

In terms of biological role, the glycine cleavage system catalyzes the degradation of glycine. The H protein shuttles the methylamine group of glycine from the P protein to the T protein. This is Glycine cleavage system H protein from Cyanothece sp. (strain PCC 7425 / ATCC 29141).